The chain runs to 418 residues: Secreted aspartic protease 5 (418 aa).

An N-terminal signal peptide occupies residues 1 to 18 (MFLKNILSVLAFALLIDA). A propeptide spans 19-76 (APVKRSPGFVTLDFNVKRSLVDPDDPTVEAKRSPLFLEFTPSEFPVDETGRDGDVDKR) (activation peptide). Residues 90-404 (YTADITVGSD…NLDDKKISMA (315 aa)) enclose the Peptidase A1 domain. Aspartate 108 is a catalytic residue. Residue 108-110 (DTG) participates in pepstatin A binding. Residues cysteine 123 and cysteine 135 are joined by a disulfide bond. 161 to 162 (GD) is a binding site for pepstatin A. Glutamate 268 contacts Zn(2+). Residue aspartate 294 is part of the active site. Position 294-298 (294-298 (DSGTT)) interacts with pepstatin A. The cysteines at positions 332 and 370 are disulfide-linked.

It belongs to the peptidase A1 family.

Its subcellular location is the secreted. It catalyses the reaction Preferential cleavage at the carboxyl of hydrophobic amino acids, but fails to cleave 15-Leu-|-Tyr-16, 16-Tyr-|-Leu-17 and 24-Phe-|-Phe-25 of insulin B chain. Activates trypsinogen, and degrades keratin.. Its activity is regulated as follows. Inhibited by pepstatin A analogs. Functionally, secreted aspartic peptidases (SAPs) are a group of ten acidic hydrolases considered as key virulence factors. These enzymes supply the fungus with nutrient amino acids as well as are able to degrade the selected host's proteins involved in the immune defense. Moreover, acts toward human hemoglobin though limited proteolysis to generate a variety of antimicrobial hemocidins, enabling to compete with the other microorganisms of the same physiological niche using the microbicidal peptides generated from the host protein. This Candida albicans (strain SC5314 / ATCC MYA-2876) (Yeast) protein is Secreted aspartic protease 5.